Consider the following 202-residue polypeptide: Probable WRKY transcription factor 59 (202 aa).

The WRKY DNA-binding region spans 103 to 168; the sequence is DEKVALDDGY…YEGRHNHPSP (66 aa).

Belongs to the WRKY group II-c family.

The protein localises to the nucleus. In terms of biological role, transcription factor. Interacts specifically with the W box (5'-(T)TGAC[CT]-3'), a frequently occurring elicitor-responsive cis-acting element. The chain is Probable WRKY transcription factor 59 (WRKY59) from Arabidopsis thaliana (Mouse-ear cress).